The chain runs to 228 residues: UPF0056 membrane protein MJ0972 (228 aa).

Helical transmembrane passes span Phe-22–Ile-42, Val-68–Ile-88, Val-133–Ile-153, Gly-163–Thr-183, and Ile-201–Leu-221.

This sequence belongs to the UPF0056 (MarC) family.

The protein resides in the cell membrane. The protein is UPF0056 membrane protein MJ0972 of Methanocaldococcus jannaschii (strain ATCC 43067 / DSM 2661 / JAL-1 / JCM 10045 / NBRC 100440) (Methanococcus jannaschii).